A 201-amino-acid polypeptide reads, in one-letter code: Inosine triphosphate pyrophosphatase (201 aa).

13 to 18 is a binding site for ITP; sequence TGNAKK. Residue glutamate 43 participates in Mg(2+) binding. Residues lysine 55, 71–72, lysine 88, 148–151, lysine 171, and 176–177 contribute to the ITP site; these read DT, FGWD, and HR.

The protein belongs to the HAM1 NTPase family. In terms of assembly, homodimer. Mg(2+) serves as cofactor. The cofactor is Mn(2+).

It is found in the cytoplasm. It catalyses the reaction ITP + H2O = IMP + diphosphate + H(+). It carries out the reaction dITP + H2O = dIMP + diphosphate + H(+). The enzyme catalyses XTP + H2O = XMP + diphosphate + H(+). The catalysed reaction is N(6)-hydroxy-dATP + H2O = N(6)-hydroxy-dAMP + diphosphate + H(+). Pyrophosphatase that hydrolyzes the non-canonical purine nucleotides inosine triphosphate (ITP), deoxyinosine triphosphate (dITP) as well as 2'-deoxy-N-6-hydroxylaminopurine triphosphate (dHAPTP) and xanthosine 5'-triphosphate (XTP) to their respective monophosphate derivatives. The enzyme does not distinguish between the deoxy- and ribose forms. Probably excludes non-canonical purines from RNA and DNA precursor pools, thus preventing their incorporation into RNA and DNA and avoiding chromosomal lesions. The sequence is that of Inosine triphosphate pyrophosphatase from Gallus gallus (Chicken).